The sequence spans 1037 residues: Cysteine-rich motor neuron 1 protein (1037 aa).

An N-terminal signal peptide occupies residues 1–34; that stretch reads MYLVAGGRGLAGCGHLSVSLLGLLLLLARSGTRA. The 78-residue stretch at 35–112 folds into the IGFBP N-terminal domain; it reads LVCLPCDESK…EYEVGVCEDE (78 aa). Over 35–940 the chain is Extracellular; the sequence is LVCLPCDESK…HPGEDSSLDS (906 aa). Cystine bridges form between C37–C60, C40–C62, C45–C63, C51–C66, C74–C90, and C84–C109. Residues 314–316 carry the Cell attachment site motif; that stretch reads RGD. N-linked (GlcNAc...) asparagine glycosylation occurs at N330. 2 consecutive VWFC domains span residues 334–391 and 401–457; these read PACV…PVCE and AGCY…PVCE. Antistasin-like domains follow at residues 469–498, 505–532, 539–564, and 567–592; these read CGEL…TCQC, CLGL…LCQC, CRPT…ICRC, and CPEL…ICKC. VWFC domains lie at 606 to 663, 677 to 735, 751 to 809, and 817 to 874; these read GTCL…PSCT, SICH…PQCT, SYCR…PYCL, and VVCH…PMCP. A helical membrane pass occupies residues 941–961; sequence IVSVVVPIIICLSIIIAFLLI. The Cytoplasmic segment spans residues 962–1037; that stretch reads NQKKQWVPLL…LQADNFYQTV (76 aa). T1036 bears the Phosphothreonine mark.

As to quaternary structure, interacts with BMP4 and BMP7. As to expression, expressed during embryonic development in brain, kidney, spinal cord, testis, lens, vibrissae, pinna, tooth primordia and in specific regions of the CNS. Expressed in adult lens. Displays male-specific expression in the fetal gonads with the strongest expression in the Sertoli cells of developing testis.

The protein resides in the membrane. May play a role in CNS development by interacting with growth factors implicated in motor neuron differentiation and survival. May play a role in capillary formation and maintenance during angiogenesis. Modulates BMP activity by affecting its processing and delivery to the cell surface. This is Cysteine-rich motor neuron 1 protein (Crim1) from Mus musculus (Mouse).